Reading from the N-terminus, the 663-residue chain is Transketolase 2 (663 aa).

Position 25 (His-25) interacts with substrate. Residues His-65 and 113 to 115 each bind thiamine diphosphate; that span reads GPL. A Mg(2+)-binding site is contributed by Asp-154. The thiamine diphosphate site is built by Gly-155 and Asn-184. Mg(2+)-binding residues include Asn-184 and Ile-186. 3 residues coordinate substrate: His-259, Arg-356, and Ser-383. His-259 contacts thiamine diphosphate. Glu-410 functions as the Proton donor in the catalytic mechanism. Phe-436 provides a ligand contact to thiamine diphosphate. Residues His-460, Asp-468, and Arg-519 each coordinate substrate.

Belongs to the transketolase family. In terms of assembly, homodimer. Mg(2+) is required as a cofactor. Requires Ca(2+) as cofactor. Mn(2+) serves as cofactor. The cofactor is Co(2+). It depends on thiamine diphosphate as a cofactor.

It carries out the reaction D-sedoheptulose 7-phosphate + D-glyceraldehyde 3-phosphate = aldehydo-D-ribose 5-phosphate + D-xylulose 5-phosphate. In terms of biological role, catalyzes the transfer of a two-carbon ketol group from a ketose donor to an aldose acceptor, via a covalent intermediate with the cofactor thiamine pyrophosphate. The sequence is that of Transketolase 2 (tkt2) from Aliivibrio fischeri (strain ATCC 700601 / ES114) (Vibrio fischeri).